Reading from the N-terminus, the 346-residue chain is Magnesium-chelatase 38 kDa subunit (346 aa).

34–41 (GHRGTGKS) contributes to the ATP binding site.

It belongs to the Mg-chelatase subunits D/I family.

The enzyme catalyses protoporphyrin IX + Mg(2+) + ATP + H2O = Mg-protoporphyrin IX + ADP + phosphate + 3 H(+). Its pathway is porphyrin-containing compound metabolism; bacteriochlorophyll biosynthesis. Functionally, involved in bacteriochlorophyll biosynthesis; introduces a magnesium ion into protoporphyrin IX to yield Mg-protoporphyrin IX. In Chlorobaculum parvum (strain DSM 263 / NCIMB 8327) (Chlorobium vibrioforme subsp. thiosulfatophilum), this protein is Magnesium-chelatase 38 kDa subunit (bchI).